The primary structure comprises 84 residues: Small ribosomal subunit protein uS15 (84 aa).

Belongs to the universal ribosomal protein uS15 family. As to quaternary structure, part of the 30S ribosomal subunit. Forms a bridge to the 50S subunit in the 70S ribosome, contacting the 23S rRNA.

In terms of biological role, one of the primary rRNA binding proteins, it binds directly to 16S rRNA where it helps nucleate assembly of the platform of the 30S subunit by binding and bridging several RNA helices of the 16S rRNA. Functionally, forms an intersubunit bridge (bridge B4) with the 23S rRNA of the 50S subunit in the ribosome. The polypeptide is Small ribosomal subunit protein uS15 (Thermosipho melanesiensis (strain DSM 12029 / CIP 104789 / BI429)).